A 199-amino-acid polypeptide reads, in one-letter code: Protein-methionine-sulfoxide reductase heme-binding subunit MsrQ (199 aa).

The next 6 helical transmembrane spans lie at 8–28 (IAWLKVFLHLAGFLPLVWLFW), 54–74 (FLLATLLVAPLARYAKQPLLI), 82–102 (LWCFAWATLHLTSYTLLELGI), 116–136 (PYLTLGMICWVILLALAATST), 149–169 (LLHNFVYLVAILAPIHYLWSV), and 171–191 (IVSPQPIIYALLAVVLLACRY).

The protein belongs to the MsrQ family. As to quaternary structure, heterodimer of a catalytic subunit (MsrP) and a heme-binding subunit (MsrQ). Requires FMN as cofactor. Heme b serves as cofactor.

Its subcellular location is the cell inner membrane. Functionally, part of the MsrPQ system that repairs oxidized periplasmic proteins containing methionine sulfoxide residues (Met-O), using respiratory chain electrons. Thus protects these proteins from oxidative-stress damage caused by reactive species of oxygen and chlorine generated by the host defense mechanisms. MsrPQ is essential for the maintenance of envelope integrity under bleach stress, rescuing a wide series of structurally unrelated periplasmic proteins from methionine oxidation. MsrQ provides electrons for reduction to the reductase catalytic subunit MsrP, using the quinone pool of the respiratory chain. This Klebsiella pneumoniae (strain 342) protein is Protein-methionine-sulfoxide reductase heme-binding subunit MsrQ.